A 223-amino-acid chain; its full sequence is Proteinase inhibitor type-2 TR8 (223 aa).

Positions 1 to 24 (MAIYKVALLLLFGMILLASDFEHA) are cleaved as a signal peptide. 3 repeat units span residues 24–81 (AKAC…EWVS), 88–145 (KKAC…EWVS), and 152–209 (EKDC…EWVS). 8 cysteine pairs are disulfide-bonded: Cys-27–Cys-120, Cys-31–Cys-116, Cys-40–Cys-126, Cys-52–Cys-95, Cys-55–Cys-73, Cys-56–Cys-91, Cys-62–Cys-104, and Cys-119–Cys-137.

This sequence belongs to the protease inhibitor I20 (potato type II proteinase inhibitor) family.

The protein is Proteinase inhibitor type-2 TR8 (ARPI) of Solanum lycopersicum (Tomato).